The chain runs to 118 residues: Large ribosomal subunit protein bL20 (118 aa).

This sequence belongs to the bacterial ribosomal protein bL20 family.

Binds directly to 23S ribosomal RNA and is necessary for the in vitro assembly process of the 50S ribosomal subunit. It is not involved in the protein synthesizing functions of that subunit. The protein is Large ribosomal subunit protein bL20 (rplT) of Buchnera aphidicola subsp. Acyrthosiphon pisum (strain APS) (Acyrthosiphon pisum symbiotic bacterium).